Reading from the N-terminus, the 1677-residue chain is Pentafunctional AROM polypeptide (1677 aa).

Positions 1 to 394 (MAVADDTKAD…YEQKASIVED (394 aa)) are 3-dehydroquinate synthase. Residues 50-52 (DDN), 89-92 (ETSK), 120-122 (GGV), and D125 each bind NAD(+). R136 is a binding site for 7-phospho-2-dehydro-3-deoxy-D-arabino-heptonate. 145 to 146 (TT) is a binding site for NAD(+). 7-phospho-2-dehydro-3-deoxy-D-arabino-heptonate-binding residues include D152 and K158. K167 provides a ligand contact to NAD(+). N168 contributes to the 7-phospho-2-dehydro-3-deoxy-D-arabino-heptonate binding site. NAD(+) is bound by residues 185-188 (YLET) and N196. E200 serves as a coordination point for Zn(2+). 7-phospho-2-dehydro-3-deoxy-D-arabino-heptonate is bound by residues 200–203 (EVVK) and K260. The active-site Proton acceptor; for 3-dehydroquinate synthase activity is E270. Residues 274 to 278 (RNLVN) and H281 each bind 7-phospho-2-dehydro-3-deoxy-D-arabino-heptonate. H281 contributes to the Zn(2+) binding site. The active-site Proton acceptor; for 3-dehydroquinate synthase activity is the H285. H297 and K366 together coordinate 7-phospho-2-dehydro-3-deoxy-D-arabino-heptonate. Zn(2+) is bound at residue H297. The tract at residues 407-858 (VVPSIPTGNV…WDDLENKIGI (452 aa)) is EPSP synthase. The For EPSP synthase activity role is filled by C840. Positions 885 to 1113 (NSSILLIGMR…GQQRRTYFLC (229 aa)) are shikimate kinase. ATP is bound at residue 892–899 (GMRGTGKT). Positions 1114-1341 (LTYPDVRHAF…AAPGQLSFKQ (228 aa)) are 3-dehydroquinase. H1243 functions as the Proton acceptor; for 3-dehydroquinate dehydratase activity in the catalytic mechanism. K1271 acts as the Schiff-base intermediate with substrate; for 3-dehydroquinate dehydratase activity in catalysis. The segment at 1354 to 1677 (SKHFHLFGTP…TRVWEKYGEV (324 aa)) is shikimate dehydrogenase.

It in the N-terminal section; belongs to the sugar phosphate cyclases superfamily. Dehydroquinate synthase family. This sequence in the 2nd section; belongs to the EPSP synthase family. In the 3rd section; belongs to the shikimate kinase family. The protein in the 4th section; belongs to the type-I 3-dehydroquinase family. It in the C-terminal section; belongs to the shikimate dehydrogenase family. In terms of assembly, homodimer. It depends on Zn(2+) as a cofactor.

It is found in the cytoplasm. It carries out the reaction 7-phospho-2-dehydro-3-deoxy-D-arabino-heptonate = 3-dehydroquinate + phosphate. It catalyses the reaction 3-dehydroquinate = 3-dehydroshikimate + H2O. The catalysed reaction is shikimate + NADP(+) = 3-dehydroshikimate + NADPH + H(+). The enzyme catalyses shikimate + ATP = 3-phosphoshikimate + ADP + H(+). It carries out the reaction 3-phosphoshikimate + phosphoenolpyruvate = 5-O-(1-carboxyvinyl)-3-phosphoshikimate + phosphate. Its pathway is metabolic intermediate biosynthesis; chorismate biosynthesis; chorismate from D-erythrose 4-phosphate and phosphoenolpyruvate: step 2/7. It functions in the pathway metabolic intermediate biosynthesis; chorismate biosynthesis; chorismate from D-erythrose 4-phosphate and phosphoenolpyruvate: step 3/7. The protein operates within metabolic intermediate biosynthesis; chorismate biosynthesis; chorismate from D-erythrose 4-phosphate and phosphoenolpyruvate: step 4/7. It participates in metabolic intermediate biosynthesis; chorismate biosynthesis; chorismate from D-erythrose 4-phosphate and phosphoenolpyruvate: step 5/7. Its pathway is metabolic intermediate biosynthesis; chorismate biosynthesis; chorismate from D-erythrose 4-phosphate and phosphoenolpyruvate: step 6/7. Functionally, the AROM polypeptide catalyzes 5 consecutive enzymatic reactions in prechorismate polyaromatic amino acid biosynthesis. This chain is Pentafunctional AROM polypeptide, found in Coprinopsis cinerea (strain Okayama-7 / 130 / ATCC MYA-4618 / FGSC 9003) (Inky cap fungus).